Consider the following 309-residue polypeptide: Postacrosomal sheath WW domain-binding protein (309 aa).

A GRAM domain is found at 45 to 87; the sequence is GRKTGTLFLTSYRVIFITSCSISDPMLSFMMPFDLMTNLTVEQ. 10 tandem repeats follow at residues 175-181, 182-188, 189-195, 217-223, 224-230, 231-237, 238-244, 245-251, 252-258, and 259-265. Residues 175-265 form a 10 X 7 AA tandem repeat of Y-G-X-P-P-X-G region; sequence YGAPPAGYGA…PLGYGAPPAG (91 aa). The PPxY motif motif lies at 186–189; that stretch reads PPGY. Positions 251-272 are enriched in low complexity; it reads GYGAPPLGYGAPPAGNEGPPAG. Residues 251–309 are disordered; sequence GYGAPPLGYGAPPAGNEGPPAGYRASPAGSGARPQESTAAQAPENEASLPSASSSQVHS. The span at 298–309 shows a compositional bias: polar residues; it reads SLPSASSSQVHS.

As to expression, expressed in testis.

Its function is as follows. May play a role in meiotic resumption and pronuclear formation, mediated by a WW domain-signaling pathway during fertilization. This is Postacrosomal sheath WW domain-binding protein (WBP2NL) from Homo sapiens (Human).